The primary structure comprises 60 residues: MAVPARRTSKTKKRMRRGHIKLNTPNVQFDATNGEYRVSHRVSPKGFYKGEQVVTPKAND.

It belongs to the bacterial ribosomal protein bL32 family.

This is Large ribosomal subunit protein bL32 from Latilactobacillus sakei subsp. sakei (strain 23K) (Lactobacillus sakei subsp. sakei).